The following is a 185-amino-acid chain: MDKVLDSALLSSANKRKGILAIGAHPDDIELGCGASLARLAQKGIYIAAVVMTTGNSGTDGIIDRHEESRNALKILGCHQTIHLNFADTRAHLQLNDMISALEDIIKNQIPSDVEIMRVYTMHDADRHQDHLAVYQASMVACRTIPQILGYETPSTWLSFMPQVFESVKEEYFTVKLAALKKHKS.

This sequence belongs to the PIGL family.

This is an uncharacterized protein from Escherichia coli (strain K12).